A 464-amino-acid chain; its full sequence is E3 ubiquitin-protein ligase RNF38 (464 aa).

Positions 1–94 (MRESEDSPSP…NSISQDENYH (94 aa)) are disordered. A Bipartite nuclear localization signal 1 motif is present at residues 6–20 (DSPSPKRQRLSHSVF). Residues 38 to 53 (MTSNRQPPSVRPNQHH) are compositionally biased toward polar residues. The short motif at 64 to 79 (RNRRSPPVRRQRGRRE) is the Bipartite nuclear localization signal 2 element. The span at 64 to 83 (RNRRSPPVRRQRGRRERLSR) shows a compositional bias: basic residues. The RING-type zinc-finger motif lies at 412–453 (CVVCMCDFESRQLLRVLPCNHEFHAKCVDKWLKGNRTCPICR).

It localises to the nucleus. The enzyme catalyses S-ubiquitinyl-[E2 ubiquitin-conjugating enzyme]-L-cysteine + [acceptor protein]-L-lysine = [E2 ubiquitin-conjugating enzyme]-L-cysteine + N(6)-ubiquitinyl-[acceptor protein]-L-lysine.. The protein operates within protein modification; protein ubiquitination. In terms of biological role, acts as an E3 ubiquitin-protein ligase able to ubiquitinate p53/TP53 which promotes its relocalization to discrete foci associated with PML nuclear bodies. Exhibits preference for UBE2D2 as a E2 enzyme. The polypeptide is E3 ubiquitin-protein ligase RNF38 (Mus musculus (Mouse)).